The primary structure comprises 568 residues: Tetratricopeptide repeat protein 22 (568 aa).

7 TPR repeats span residues 66 to 99, 101 to 133, 155 to 190, 203 to 237, 260 to 294, 296 to 328, and 432 to 465; these read PAVR…DPGN, NAWA…MGLE, YAHG…GQQI, ATLF…LGEV, KDTF…AKNQ, PILN…LTDP, and PELQ…DDEG.

This Mus musculus (Mouse) protein is Tetratricopeptide repeat protein 22 (Ttc22).